The chain runs to 302 residues: N-acetylmuramic acid 6-phosphate etherase (302 aa).

The 164-residue stretch at 58–221 (IGESFLNGGR…STGAMVKTGK (164 aa)) folds into the SIS domain. Glu86 acts as the Proton donor in catalysis. Glu117 is a catalytic residue.

It belongs to the GCKR-like family. MurNAc-6-P etherase subfamily. Homodimer.

The enzyme catalyses N-acetyl-D-muramate 6-phosphate + H2O = N-acetyl-D-glucosamine 6-phosphate + (R)-lactate. It participates in amino-sugar metabolism; N-acetylmuramate degradation. Functionally, specifically catalyzes the cleavage of the D-lactyl ether substituent of MurNAc 6-phosphate, producing GlcNAc 6-phosphate and D-lactate. The sequence is that of N-acetylmuramic acid 6-phosphate etherase from Clostridium botulinum (strain Langeland / NCTC 10281 / Type F).